A 380-amino-acid polypeptide reads, in one-letter code: Bifunctional dihydropteroate synthase/dihydropteroate reductase (380 aa).

Residues 1-104 (MIVKRLNPDA…SQPFGLKHLA (104 aa)) are dihydropteroate reductase. The tract at residues 105–380 (QELKSHLKAP…KVFKSLEETD (276 aa)) is dihydropteroate synthase. The Pterin-binding domain occupies 119 to 371 (PQIMAVLNLT…DIDEHIDLIK (253 aa)). Asn-126 lines the Mg(2+) pocket. (7,8-dihydropterin-6-yl)methyl diphosphate contacts are provided by residues Asp-202, Asn-221, Asp-289, Lys-325, and 359 to 361 (RVH).

The protein in the C-terminal section; belongs to the DHPS family. FAD is required as a cofactor. FMN serves as cofactor. Requires Mg(2+) as cofactor.

It catalyses the reaction (7,8-dihydropterin-6-yl)methyl diphosphate + 4-aminobenzoate = 7,8-dihydropteroate + diphosphate. It carries out the reaction (6S)-5,6,7,8-tetrahydropteroate + NAD(+) = 7,8-dihydropteroate + NADH + H(+). It participates in cofactor biosynthesis; tetrahydrofolate biosynthesis; 7,8-dihydrofolate from 2-amino-4-hydroxy-6-hydroxymethyl-7,8-dihydropteridine diphosphate and 4-aminobenzoate: step 1/2. In terms of biological role, bifunctional enzyme that catalyzes the formation of dihydropteroate, the immediate precursor of folic acid and the reduction of dihydropteroate to tetrahydropteroate. In Helicobacter pylori (strain ATCC 700392 / 26695) (Campylobacter pylori), this protein is Bifunctional dihydropteroate synthase/dihydropteroate reductase.